Here is a 348-residue protein sequence, read N- to C-terminus: Protein RecA (348 aa).

ATP is bound at residue 65–72; that stretch reads GPESSGKT.

This sequence belongs to the RecA family.

Its subcellular location is the cytoplasm. Functionally, can catalyze the hydrolysis of ATP in the presence of single-stranded DNA, the ATP-dependent uptake of single-stranded DNA by duplex DNA, and the ATP-dependent hybridization of homologous single-stranded DNAs. It interacts with LexA causing its activation and leading to its autocatalytic cleavage. This Vibrio natriegens protein is Protein RecA.